A 146-amino-acid chain; its full sequence is MAIYGIGTDVVQISRIAAVLERTGGRFAEKVLGPDELRVFHARRARSEARGIAFLATRFSAKEAFSKAIGLGMHWPMTWRALQTLNQRSGEPYVVASGELADWLAARGITARVTVSDERDYAVSFVVAETDVAPPPAPAPVSRTTP.

Mg(2+) is bound by residues aspartate 9 and glutamate 63.

It belongs to the P-Pant transferase superfamily. AcpS family. The cofactor is Mg(2+).

It is found in the cytoplasm. The catalysed reaction is apo-[ACP] + CoA = holo-[ACP] + adenosine 3',5'-bisphosphate + H(+). Functionally, transfers the 4'-phosphopantetheine moiety from coenzyme A to a Ser of acyl-carrier-protein. This Burkholderia ambifaria (strain MC40-6) protein is Holo-[acyl-carrier-protein] synthase.